The primary structure comprises 188 residues: uncharacterized protein (188 aa).

Positions 1–15 (MVSSKDKIKEELKQE) are enriched in basic and acidic residues. The interval 1 to 21 (MVSSKDKIKEELKQEEPEENV) is disordered.

This is an uncharacterized protein from Saccharolobus islandicus (Sulfolobus islandicus).